Consider the following 161-residue polypeptide: 2-C-methyl-D-erythritol 2,4-cyclodiphosphate synthase (161 aa).

Residues D8 and H10 each contribute to the a divalent metal cation site. Residues 8–10 and 34–35 each bind 4-CDP-2-C-methyl-D-erythritol 2-phosphate; these read DLH and HS. An a divalent metal cation-binding site is contributed by H42. Residues 56–58 and R142 contribute to the 4-CDP-2-C-methyl-D-erythritol 2-phosphate site; that span reads DIG.

Belongs to the IspF family. Homotrimer. A divalent metal cation serves as cofactor.

It catalyses the reaction 4-CDP-2-C-methyl-D-erythritol 2-phosphate = 2-C-methyl-D-erythritol 2,4-cyclic diphosphate + CMP. Its pathway is isoprenoid biosynthesis; isopentenyl diphosphate biosynthesis via DXP pathway; isopentenyl diphosphate from 1-deoxy-D-xylulose 5-phosphate: step 4/6. Involved in the biosynthesis of isopentenyl diphosphate (IPP) and dimethylallyl diphosphate (DMAPP), two major building blocks of isoprenoid compounds. Catalyzes the conversion of 4-diphosphocytidyl-2-C-methyl-D-erythritol 2-phosphate (CDP-ME2P) to 2-C-methyl-D-erythritol 2,4-cyclodiphosphate (ME-CPP) with a corresponding release of cytidine 5-monophosphate (CMP). This chain is 2-C-methyl-D-erythritol 2,4-cyclodiphosphate synthase, found in Treponema denticola (strain ATCC 35405 / DSM 14222 / CIP 103919 / JCM 8153 / KCTC 15104).